The following is a 435-amino-acid chain: T-box transcription factor T (435 aa).

Residues 51–219 constitute a DNA-binding region (T-box); the sequence is LWLRFKELTN…YNPFAKAFLD (169 aa). Disordered regions lie at residues 280 to 310 and 384 to 412; these read PALR…PSAC and APLG…DVPD. The segment covering 297-310 has biased composition (polar residues); the sequence is RNNSPTYSDNPSAC.

In terms of assembly, monomer. Binds DNA as a monomer.

Its subcellular location is the nucleus. Functionally, involved in the transcriptional regulation of genes required for mesoderm formation and differentiation. Binds to a palindromic site (called T site) and activates gene transcription when bound to such a site. This Canis lupus familiaris (Dog) protein is T-box transcription factor T.